Reading from the N-terminus, the 564-residue chain is Proline--tRNA ligase (564 aa).

It belongs to the class-II aminoacyl-tRNA synthetase family. ProS type 1 subfamily. In terms of assembly, homodimer.

The protein localises to the cytoplasm. It catalyses the reaction tRNA(Pro) + L-proline + ATP = L-prolyl-tRNA(Pro) + AMP + diphosphate. Functionally, catalyzes the attachment of proline to tRNA(Pro) in a two-step reaction: proline is first activated by ATP to form Pro-AMP and then transferred to the acceptor end of tRNA(Pro). As ProRS can inadvertently accommodate and process non-cognate amino acids such as alanine and cysteine, to avoid such errors it has two additional distinct editing activities against alanine. One activity is designated as 'pretransfer' editing and involves the tRNA(Pro)-independent hydrolysis of activated Ala-AMP. The other activity is designated 'posttransfer' editing and involves deacylation of mischarged Ala-tRNA(Pro). The misacylated Cys-tRNA(Pro) is not edited by ProRS. This is Proline--tRNA ligase from Thermosipho melanesiensis (strain DSM 12029 / CIP 104789 / BI429).